Here is a 371-residue protein sequence, read N- to C-terminus: Cytoplasmic tRNA 2-thiolation protein 1 (371 aa).

The protein belongs to the TtcA family. CTU1/NCS6/ATPBD3 subfamily.

The protein localises to the cytoplasm. Its pathway is tRNA modification; 5-methoxycarbonylmethyl-2-thiouridine-tRNA biosynthesis. Its function is as follows. Plays a central role in 2-thiolation of mcm(5)S(2)U at tRNA wobble positions of tRNA(Lys), tRNA(Glu) and tRNA(Gln). Directly binds tRNAs and probably acts by catalyzing adenylation of tRNAs, an intermediate required for 2-thiolation. It is unclear whether it acts as a sulfurtransferase that transfers sulfur from thiocarboxylated URM1 onto the uridine of tRNAs at wobble position. Prior mcm(5) tRNA modification by the elongator complex is required for 2-thiolation. May also be involved in protein urmylation. The polypeptide is Cytoplasmic tRNA 2-thiolation protein 1 (Kluyveromyces lactis (strain ATCC 8585 / CBS 2359 / DSM 70799 / NBRC 1267 / NRRL Y-1140 / WM37) (Yeast)).